The chain runs to 130 residues: kinetoplast-associated protein 2-2 (130 aa).

A propeptide spanning residues 1–10 (MLRRTVSNFA) is cleaved from the precursor. The interval 95 to 130 (ETKQAQRAKAQKAQKKPKSAKSKVKKAAKKAKKSKK) is disordered. Residues 103 to 130 (KAQKAQKKPKSAKSKVKKAAKKAKKSKK) are compositionally biased toward basic residues.

The protein belongs to the KAP family. Associates with the kinetoplast DNA network.

It is found in the mitochondrion matrix. It localises to the kinetoplast. Its function is as follows. Histone H1-like DNA-binding protein involved in the organization and segregation of kinetoplast DNA (kDNA). The mitochondrial DNA of kinetoplastid protozoa consists of about 5,000 minicircles and 20 to 30 maxicircles. These circular DNAs are held together by catenation into a highly organized compact disk structure referred to as a kinetoplast DNA (kDNA) network. Binds preferentially to a specific fragment of minicircle DNA and is able to compact kDNA networks through DNA charge neutralization and condensation. This is kinetoplast-associated protein 2-2 (KAP2-2) from Crithidia fasciculata.